The primary structure comprises 311 residues: Nod factor export ATP-binding protein I (311 aa).

In terms of domain architecture, ABC transporter spans 13-243 (IDLAGVSKSY…QIGCPVIEIY (231 aa)). Position 45-52 (45-52 (GPNGAGKS)) interacts with ATP.

Belongs to the ABC transporter superfamily. Lipooligosaccharide exporter (TC 3.A.1.102) family. As to quaternary structure, the complex is composed of two ATP-binding proteins (NodI) and two transmembrane proteins (NodJ).

Its subcellular location is the cell inner membrane. Part of the ABC transporter complex NodIJ involved in the export of the nodulation factors (Nod factors), the bacterial signal molecules that induce symbiosis and subsequent nodulation induction. Nod factors are LCO (lipo-chitin oligosaccharide), a modified beta-1,4-linked N-acetylglucosamine oligosaccharide. This subunit is responsible for energy coupling to the transport system. This Rhizobium johnstonii (strain DSM 114642 / LMG 32736 / 3841) (Rhizobium leguminosarum bv. viciae) protein is Nod factor export ATP-binding protein I.